The following is a 200-amino-acid chain: Probable GTP-binding protein EngB (200 aa).

The EngB-type G domain maps to 24–198 (EGMEVAFAGR…QAQLDEWLGI (175 aa)). Residues 32 to 39 (GRSNVGKS), 59 to 63 (GRTQM), 77 to 80 (DLPG), 144 to 147 (TKSD), and 177 to 179 (FSA) each bind GTP. Mg(2+) is bound by residues Ser-39 and Thr-61.

The protein belongs to the TRAFAC class TrmE-Era-EngA-EngB-Septin-like GTPase superfamily. EngB GTPase family. The cofactor is Mg(2+).

Its function is as follows. Necessary for normal cell division and for the maintenance of normal septation. This Nitrosococcus oceani (strain ATCC 19707 / BCRC 17464 / JCM 30415 / NCIMB 11848 / C-107) protein is Probable GTP-binding protein EngB.